We begin with the raw amino-acid sequence, 322 residues long: Acetyl-coenzyme A carboxylase carboxyl transferase subunit alpha (322 aa).

Positions 40–297 (PLQKKLGDLR…RETLTRNLEE (258 aa)) constitute a CoA carboxyltransferase C-terminal domain.

Belongs to the AccA family. Acetyl-CoA carboxylase is a heterohexamer composed of biotin carboxyl carrier protein (AccB), biotin carboxylase (AccC) and two subunits each of ACCase subunit alpha (AccA) and ACCase subunit beta (AccD).

It localises to the cytoplasm. The enzyme catalyses N(6)-carboxybiotinyl-L-lysyl-[protein] + acetyl-CoA = N(6)-biotinyl-L-lysyl-[protein] + malonyl-CoA. The protein operates within lipid metabolism; malonyl-CoA biosynthesis; malonyl-CoA from acetyl-CoA: step 1/1. Its function is as follows. Component of the acetyl coenzyme A carboxylase (ACC) complex. First, biotin carboxylase catalyzes the carboxylation of biotin on its carrier protein (BCCP) and then the CO(2) group is transferred by the carboxyltransferase to acetyl-CoA to form malonyl-CoA. The polypeptide is Acetyl-coenzyme A carboxylase carboxyl transferase subunit alpha (Gemmatimonas aurantiaca (strain DSM 14586 / JCM 11422 / NBRC 100505 / T-27)).